A 743-amino-acid chain; its full sequence is Beta-galactosidase (743 aa).

The active-site Proton donor is glutamate 388. Residue glutamate 453 is the Nucleophile of the active site.

Belongs to the glycosyl hydrolase 2 family. As to quaternary structure, homodimer.

It carries out the reaction Hydrolysis of terminal non-reducing beta-D-galactose residues in beta-D-galactosides.. Functionally, beta-galactosidase. In Thermoanaerobacter pseudethanolicus (strain ATCC 33223 / 39E) (Clostridium thermohydrosulfuricum), this protein is Beta-galactosidase (lacZ).